The chain runs to 204 residues: Large ribosomal subunit protein eL15 (204 aa).

The protein belongs to the eukaryotic ribosomal protein eL15 family. As to quaternary structure, component of the large ribosomal subunit.

It is found in the cytoplasm. Its function is as follows. Component of the large ribosomal subunit. The ribosome is a large ribonucleoprotein complex responsible for the synthesis of proteins in the cell. This is Large ribosomal subunit protein eL15 (rpl15) from Carassius auratus (Goldfish).